The chain runs to 726 residues: Mitotic spindle checkpoint protein MAD1 (726 aa).

Residues 1-30 (MILRTPQPKRLRSDAGESPFPTGATGSGNQ) form a disordered region. 2 coiled-coil regions span residues 68-246 (ADVL…LKLI) and 272-625 (SDNS…VFAD).

It belongs to the MAD1 family. Homodimer. Part of the mitotic checkpoint complex (MCC). Interacts with MAD2 and NUA.

It is found in the nucleus envelope. Required for the execution of the mitotic checkpoint which monitors the process of kinetochore-spindle attachment and delays the onset of anaphase when this process is not complete. It inhibits the activity of the anaphase promoting complex by sequestering CDC20 until all chromosomes are aligned at the metaphase plate. Required for anchoring MAD2 to the nuclear envelope. This chain is Mitotic spindle checkpoint protein MAD1, found in Arabidopsis thaliana (Mouse-ear cress).